Here is a 138-residue protein sequence, read N- to C-terminus: ATP synthase epsilon chain (138 aa).

It belongs to the ATPase epsilon chain family. As to quaternary structure, F-type ATPases have 2 components, CF(1) - the catalytic core - and CF(0) - the membrane proton channel. CF(1) has five subunits: alpha(3), beta(3), gamma(1), delta(1), epsilon(1). CF(0) has three main subunits: a, b and c.

It is found in the cell membrane. Its function is as follows. Produces ATP from ADP in the presence of a proton gradient across the membrane. This Streptococcus pyogenes serotype M3 (strain ATCC BAA-595 / MGAS315) protein is ATP synthase epsilon chain.